The primary structure comprises 89 residues: Small ribosomal subunit protein uS15 (89 aa).

This sequence belongs to the universal ribosomal protein uS15 family. As to quaternary structure, part of the 30S ribosomal subunit. Forms a bridge to the 50S subunit in the 70S ribosome, contacting the 23S rRNA.

Functionally, one of the primary rRNA binding proteins, it binds directly to 16S rRNA where it helps nucleate assembly of the platform of the 30S subunit by binding and bridging several RNA helices of the 16S rRNA. Forms an intersubunit bridge (bridge B4) with the 23S rRNA of the 50S subunit in the ribosome. The chain is Small ribosomal subunit protein uS15 from Gloeobacter violaceus (strain ATCC 29082 / PCC 7421).